A 49-amino-acid chain; its full sequence is Large ribosomal subunit protein bL33 (49 aa).

This sequence belongs to the bacterial ribosomal protein bL33 family.

The chain is Large ribosomal subunit protein bL33 from Caldanaerobacter subterraneus subsp. tengcongensis (strain DSM 15242 / JCM 11007 / NBRC 100824 / MB4) (Thermoanaerobacter tengcongensis).